We begin with the raw amino-acid sequence, 54 residues long: U-reduvitoxin-Pr1a (54 aa).

An N-terminal signal peptide occupies residues 1 to 19 (MKLLGLLLLVFTFMALAFA). Cystine bridges form between Cys24-Cys39, Cys31-Cys44, and Cys38-Cys51.

This sequence belongs to the venom Ptu1-like knottin family. In terms of tissue distribution, expressed by the venom gland (posterior main gland) (at protein level).

The protein resides in the secreted. Its function is as follows. Binds reversibly and blocks P/Q-type voltage-gated calcium channels (Cav). This is U-reduvitoxin-Pr1a from Platymeris rhadamanthus (Red spot assassin bug).